The primary structure comprises 493 residues: MYSRPSNYAPSKDVYGGEMRSQPAYSYYPEEEIQHFYRWSSPPGIIKIMSILIVVMCVGIFACVASTLPWDLDITGQSMGYGMGSGSYSGGYTGYGFGGSQMGLGFAYGGNYTDPRAAKGFILAMAAFCFIIGLVIFVMLVTRTPLSTSRKFYLIVIIVSAIIGGLVFIATIVYTVGVNPVAQASGSAFYTQIVSICNQFYSPVQTGVFVNQYLYHYCVVEPQEAIAIVLGFLIVVAFAIIIFFAVKTRKKINQYGKTNILWKKNHIYEDGDPQVEQWVKNVAENSAPALSDYNEKVDGSVADYRSANGVQAYPSQNNISHPIAEEELPLKEDYGMSPRHYSSSSDATTKKAPPKKRPGKPRRSDLDTNEGGYNTGGESADELEDDSWDSEYPPITQTKQRQEYKQEFASDLHEYKRLQAELDELSKIPVPSLNRELGQSSRKDSEEYRTVADKYNRLKEIKSSADYRNKKKRCKGLKTKLNHIKQMVSNYDK.

The Cytoplasmic segment spans residues 1-47; sequence MYSRPSNYAPSKDVYGGEMRSQPAYSYYPEEEIQHFYRWSSPPGIIK. The region spanning 41–250 is the MARVEL domain; sequence SPPGIIKIMS…IIFFAVKTRK (210 aa). The helical transmembrane segment at 48 to 70 threads the bilayer; that stretch reads IMSILIVVMCVGIFACVASTLPW. The Extracellular segment spans residues 71–116; that stretch reads DLDITGQSMGYGMGSGSYSGGYTGYGFGGSQMGLGFAYGGNYTDPR. The helical transmembrane segment at 117-141 threads the bilayer; that stretch reads AAKGFILAMAAFCFIIGLVIFVMLV. Topologically, residues 142 to 151 are cytoplasmic; that stretch reads TRTPLSTSRK. The chain crosses the membrane as a helical span at residues 152 to 176; sequence FYLIVIIVSAIIGGLVFIATIVYTV. Topologically, residues 177–224 are extracellular; it reads GVNPVAQASGSAFYTQIVSICNQFYSPVQTGVFVNQYLYHYCVVEPQE. Residues C197 and C218 are joined by a disulfide bond. A helical transmembrane segment spans residues 225-246; it reads AIAIVLGFLIVVAFAIIIFFAV. Topologically, residues 247 to 493 are cytoplasmic; it reads KTRKKINQYG…IKQMVSNYDK (247 aa). A disordered region spans residues 334–407; that stretch reads YGMSPRHYSS…TKQRQEYKQE (74 aa). The segment covering 352–361 has biased composition (basic residues); it reads APPKKRPGKP. T375 carries the phosphothreonine; by CK2; in vitro modification. A Phosphoserine; by CK2; in vitro modification is found at S379. Acidic residues predominate over residues 379–389; sequence SADELEDDSWD. The OCEL domain maps to 386–493; the sequence is DSWDSEYPPI…IKQMVSNYDK (108 aa). Positions 396 to 428 form a coiled coil; that stretch reads TQTKQRQEYKQEFASDLHEYKRLQAELDELSKI.

Belongs to the ELL/occludin family. Interacts in vitro with cingulin, possibly directly. Interacts with ZO-1. In terms of processing, phosphorylated. As to expression, localized at tight junctions of both epithelial and endothelial cells.

Its subcellular location is the cell membrane. It is found in the cell junction. It localises to the tight junction. Its function is as follows. Probably plays a role in the formation and regulation of the tight junction (TJ) paracellular permeability barrier. This Xenopus laevis (African clawed frog) protein is Occludin (ocln).